A 1436-amino-acid chain; its full sequence is DNA polymerase III PolC-type (1436 aa).

Residues tyrosine 420–phenylalanine 576 enclose the Exonuclease domain.

Belongs to the DNA polymerase type-C family. PolC subfamily.

It localises to the cytoplasm. It catalyses the reaction DNA(n) + a 2'-deoxyribonucleoside 5'-triphosphate = DNA(n+1) + diphosphate. In terms of biological role, required for replicative DNA synthesis. This DNA polymerase also exhibits 3' to 5' exonuclease activity. This chain is DNA polymerase III PolC-type, found in Staphylococcus aureus (strain MW2).